The chain runs to 255 residues: Poxin (255 aa).

It belongs to the poxin family. Highly divergent.

The enzyme catalyses 2',3'-cGAMP + H2O = Gp(2'-5')Ap(3') + H(+). Nuclease that cleaves 2',3'-cGAMP. In Bombyx mori (Silk moth), this protein is Poxin.